Consider the following 435-residue polypeptide: Serine--tRNA ligase (435 aa).

237-239 (TAE) provides a ligand contact to L-serine. 268 to 270 (RSE) contributes to the ATP binding site. An L-serine-binding site is contributed by Glu-291. ATP is bound at residue 355 to 358 (EISS). Ser-390 provides a ligand contact to L-serine.

The protein belongs to the class-II aminoacyl-tRNA synthetase family. Type-1 seryl-tRNA synthetase subfamily. As to quaternary structure, homodimer. The tRNA molecule binds across the dimer.

It localises to the cytoplasm. The catalysed reaction is tRNA(Ser) + L-serine + ATP = L-seryl-tRNA(Ser) + AMP + diphosphate + H(+). It carries out the reaction tRNA(Sec) + L-serine + ATP = L-seryl-tRNA(Sec) + AMP + diphosphate + H(+). Its pathway is aminoacyl-tRNA biosynthesis; selenocysteinyl-tRNA(Sec) biosynthesis; L-seryl-tRNA(Sec) from L-serine and tRNA(Sec): step 1/1. Its function is as follows. Catalyzes the attachment of serine to tRNA(Ser). Is also able to aminoacylate tRNA(Sec) with serine, to form the misacylated tRNA L-seryl-tRNA(Sec), which will be further converted into selenocysteinyl-tRNA(Sec). The chain is Serine--tRNA ligase from Lactobacillus acidophilus (strain ATCC 700396 / NCK56 / N2 / NCFM).